A 456-amino-acid chain; its full sequence is Chordin-like protein 1 (456 aa).

Residues Met1 to Leu28 form the signal peptide. VWFC domains are found at residues Thr36–Pro101, Lys115–Arg181, and Arg262–Pro327. An N-linked (GlcNAc...) asparagine glycan is attached at Asn120. The short motif at Arg181–Asp183 is the Cell attachment site element. Asn295 carries N-linked (GlcNAc...) asparagine glycosylation.

As to expression, mainly expressed in the ventral retina.

Its subcellular location is the secreted. Functionally, seems to antagonize the function of BMP4 by binding to it and preventing its interaction with receptors. The chain is Chordin-like protein 1 (CHRDL1) from Gallus gallus (Chicken).